Here is a 310-residue protein sequence, read N- to C-terminus: p-hydroxybenzoic acid efflux pump subunit AaeA (310 aa).

The chain crosses the membrane as a helical span at residues 12-32 (AITLVLVILAFIAIFRAWVYY).

Belongs to the membrane fusion protein (MFP) (TC 8.A.1) family.

The protein localises to the cell inner membrane. In terms of biological role, forms an efflux pump with AaeB. In Escherichia fergusonii (strain ATCC 35469 / DSM 13698 / CCUG 18766 / IAM 14443 / JCM 21226 / LMG 7866 / NBRC 102419 / NCTC 12128 / CDC 0568-73), this protein is p-hydroxybenzoic acid efflux pump subunit AaeA.